The sequence spans 222 residues: Large ribosomal subunit protein uL4 (222 aa).

This sequence belongs to the universal ribosomal protein uL4 family. In terms of assembly, part of the 50S ribosomal subunit.

Functionally, one of the primary rRNA binding proteins, this protein initially binds near the 5'-end of the 23S rRNA. It is important during the early stages of 50S assembly. It makes multiple contacts with different domains of the 23S rRNA in the assembled 50S subunit and ribosome. In terms of biological role, forms part of the polypeptide exit tunnel. This Acidobacterium capsulatum (strain ATCC 51196 / DSM 11244 / BCRC 80197 / JCM 7670 / NBRC 15755 / NCIMB 13165 / 161) protein is Large ribosomal subunit protein uL4.